Consider the following 214-residue polypeptide: ATP-dependent Clp protease proteolytic subunit (214 aa).

The active-site Nucleophile is Ser114. His139 is a catalytic residue.

It belongs to the peptidase S14 family. Fourteen ClpP subunits assemble into 2 heptameric rings which stack back to back to give a disk-like structure with a central cavity, resembling the structure of eukaryotic proteasomes.

It localises to the cytoplasm. The enzyme catalyses Hydrolysis of proteins to small peptides in the presence of ATP and magnesium. alpha-casein is the usual test substrate. In the absence of ATP, only oligopeptides shorter than five residues are hydrolyzed (such as succinyl-Leu-Tyr-|-NHMec, and Leu-Tyr-Leu-|-Tyr-Trp, in which cleavage of the -Tyr-|-Leu- and -Tyr-|-Trp bonds also occurs).. Cleaves peptides in various proteins in a process that requires ATP hydrolysis. Has a chymotrypsin-like activity. Plays a major role in the degradation of misfolded proteins. This Nitrosomonas eutropha (strain DSM 101675 / C91 / Nm57) protein is ATP-dependent Clp protease proteolytic subunit.